A 519-amino-acid polypeptide reads, in one-letter code: Sensory neuron membrane protein 2 (519 aa).

At 1-7 (MLAKHSK) the chain is on the cytoplasmic side. The helical transmembrane segment at 8 to 28 (LFFTGSVVFLIVAIVLASWGF) threads the bilayer. Residues 29–469 (PKIISTRIQK…DAHALLSYAQ (441 aa)) are Extracellular-facing. N44, N67, N104, N166, N229, N272, and N314 each carry an N-linked (GlcNAc...) asparagine glycan. 3 disulfide bridges follow: C268–C338, C299–C362, and C340–C351. A helical transmembrane segment spans residues 470–490 (LARWIILAAAIILAIIATITV). Residues 491 to 519 (ARSTSLISWPRNSNSVNFIIGPMVNDKMR) lie on the Cytoplasmic side of the membrane.

Belongs to the CD36 family. Localizes to both male and female antennae but not the leg, wing, gut, head or thoracic ganglia. Detected throughout the sensory epithelium, associating with both sex-pheromone sensilla and plant-volatile sensilla. Differentially expressed among different sensilla and different neurons within a given sensillum.

Its subcellular location is the cell membrane. Plays an olfactory role that is not restricted to pheromone sensitivity. In Manduca sexta (Tobacco hawkmoth), this protein is Sensory neuron membrane protein 2.